We begin with the raw amino-acid sequence, 373 residues long: Nodulation protein NolL (373 aa).

Transmembrane regions (helical) follow at residues 27–47 (DFAK…QYLI), 62–82 (SIYM…SSGA), 98–118 (QLLL…SAVI), 140–160 (WFIW…TFNR), 164–184 (WIIS…SITP), 212–232 (RYKW…FLGW), 253–273 (QVFL…QSMF), 286–306 (RFVA…QGAV), and 324–344 (RITF…AIRS).

The protein belongs to the acyltransferase 3 family.

The protein localises to the cell membrane. Functionally, thought to be an acetyltransferase that modifies the fucose of the nod factor. This is Nodulation protein NolL (nolL) from Mesorhizobium japonicum (strain LMG 29417 / CECT 9101 / MAFF 303099) (Mesorhizobium loti (strain MAFF 303099)).